The following is a 563-amino-acid chain: Coiled-coil domain-containing protein 38 (563 aa).

Over residues 1-11 the composition is skewed to polar residues; it reads MSSNLLPTLNS. Residues 1-21 are disordered; sequence MSSNLLPTLNSGGKVKDGSTK. A coiled-coil region spans residues 129-212; it reads KRNTIKKFEK…VKSEIAKTEF (84 aa). Residues 272 to 311 form a disordered region; the sequence is ESGRTAVLSEDASQGRDSQGKPSRSLTRTPEKKKSNLAES. Residues 282–299 show a composition bias toward polar residues; it reads DASQGRDSQGKPSRSLTR. Coiled-coil stretches lie at residues 384–415 and 497–522; these read NIEF…KSKL and RDEK…AVAQ. The interval 522-563 is disordered; sequence QPKKKLGRRLVFHSKPPSGNKQQLPLVNETKTKSQEEEYFFT. A compositionally biased stretch (basic residues) spans 523 to 533; sequence PKKKLGRRLVF.

Interacts with CCDC42, CFAP53, IFT88 and ODF2. Interacts with CCDC146. Interacts with TEKT3. Interacts with ubiquitinated histone H2A.

Its subcellular location is the cytoplasm. The protein resides in the cytoskeleton. It is found in the microtubule organizing center. The protein localises to the centrosome. It localises to the perinuclear region. Its subcellular location is the cell projection. The protein resides in the cilium. It is found in the flagellum. Essential for male fertility. Required for sperm flagellum biogenesis. Also required for acrosome biogenesis. Required for the attachment of developing acrosomes to the nucleus during spermiogenesis and may be involved in the transport of fibrous sheath components. The polypeptide is Coiled-coil domain-containing protein 38 (CCDC38) (Homo sapiens (Human)).